Reading from the N-terminus, the 1756-residue chain is Periplakin (1756 aa).

Ser-14 carries the phosphoserine modification. Coiled-coil stretches lie at residues 16–125 and 188–389; these read TVQT…KQIY and KEQN…QQVV. Spectrin repeat units follow at residues 216 to 317, 323 to 485, 505 to 612, and 733 to 861; these read QDYM…SHLK, HQFH…RTLQ, RQLL…EKVD, and EHFH…QNLE. The region spanning 399-455 is the SH3 domain; that stretch reads LKPIPVEALCDFEGEQGLISRGYSYTLQKNNGESWELMDSAGNKLIAPAVCFVIPPT. Ser-465 is subject to Phosphoserine. 2 coiled-coil regions span residues 585–820 and 886–1645; these read LLRT…GRRS and DSGV…SVAV. Phosphoserine occurs at positions 887, 949, 1584, and 1657. Residues 1557-1756 are interacts with BFSP2 and VIM; that stretch reads ELDFLREENH…ELAVLVSGQK (200 aa). Plectin repeat units lie at residues 1651 to 1685 and 1700 to 1735; these read ENHLRRSIVVIHPDTGRELSPEEAHRAGLIDWNMF and VKGPNGESSVIHDRKSGKKFSIEEALQSGRLTPAQY.

The protein belongs to the plakin or cytolinker family. Homodimer or a heterodimer with EVPL. Found in a complex composed of PPL (via C-terminal linker domain), BFSP1 and BFSP2 in the retinal lens. Within the complex interacts (via C-terminal linker domain) with BFSP2. Interacts with VIM. Binds to the PH domain of AKT1. Interacts with FCGR1A. May interact with PPHLN1. In terms of tissue distribution, expressed in stratified squamous epithelia and in some other epithelia.

The protein localises to the cell junction. Its subcellular location is the desmosome. It is found in the cytoplasm. The protein resides in the cytoskeleton. It localises to the cell membrane. Its function is as follows. Component of the cornified envelope of keratinocytes. May link the cornified envelope to desmosomes and intermediate filaments. May act as a localization signal in PKB/AKT-mediated signaling. This chain is Periplakin (PPL), found in Homo sapiens (Human).